The sequence spans 116 residues: Large ribosomal subunit protein uL18 (116 aa).

Belongs to the universal ribosomal protein uL18 family. Part of the 50S ribosomal subunit; part of the 5S rRNA/L5/L18/L25 subcomplex. Contacts the 5S and 23S rRNAs.

This is one of the proteins that bind and probably mediate the attachment of the 5S RNA into the large ribosomal subunit, where it forms part of the central protuberance. This chain is Large ribosomal subunit protein uL18, found in Marinomonas sp. (strain MWYL1).